Reading from the N-terminus, the 699-residue chain is Keratinocyte proline-rich protein (699 aa).

S436 bears the Phosphoserine mark. 2 stretches are compositionally biased toward pro residues: residues 448 to 477 (PYPR…PSPE) and 513 to 533 (DPCP…PSPE). Positions 448-533 (PYPRPEPCPS…PCPEPCPSPE (86 aa)) are disordered.

Expressed in the stratified squamous epithelial layers of the skin, esophagus and tongue.

The protein resides in the cytoplasm. This Rattus norvegicus (Rat) protein is Keratinocyte proline-rich protein (Kprp).